Consider the following 239-residue polypeptide: MDTSQLKERVAYHAIDTLFSEGKIFDGMKIGLGTGSTAMPAVHRLAQLLSSGKLKKIYAVPTSFQTSIECEKLGIPIYSLSSQQIGGSLDLAIDGADEIDPDKNLIKGGGAALLKEKIIAYNSKEFVVIADERKKVKSMGKGFALPIEIIPEARLSITKALEAQGIEVFLREGVKKMGPVVTDNGNFIIDVKWPKAADVDPKALEESLNKITGVVENGFFTKNTPRVFIVHQDGNIEDL.

Substrate-binding positions include 34–37 (TGST), 94–97 (DGAD), and 107–110 (KGGG). Glu116 (proton acceptor) is an active-site residue. Lys134 is a binding site for substrate.

Belongs to the ribose 5-phosphate isomerase family. As to quaternary structure, homodimer.

It catalyses the reaction aldehydo-D-ribose 5-phosphate = D-ribulose 5-phosphate. The protein operates within carbohydrate degradation; pentose phosphate pathway; D-ribose 5-phosphate from D-ribulose 5-phosphate (non-oxidative stage): step 1/1. Functionally, catalyzes the reversible conversion of ribose-5-phosphate to ribulose 5-phosphate. This Treponema denticola (strain ATCC 35405 / DSM 14222 / CIP 103919 / JCM 8153 / KCTC 15104) protein is Ribose-5-phosphate isomerase A.